A 203-amino-acid chain; its full sequence is dCTP deaminase (203 aa).

DCTP is bound by residues 105–110 (RSSLGR), aspartate 123, 131–133 (TLE), glutamine 152, tyrosine 166, lysine 173, and glutamine 177. Glutamate 133 acts as the Proton donor/acceptor in catalysis. Positions 164-203 (RPYGVERGSKYQDQDGPQASRIGSDPEFHSDENQAAEHES) are disordered. Positions 166–176 (YGVERGSKYQD) are enriched in basic and acidic residues. Residues 187-203 (SDPEFHSDENQAAEHES) show a composition bias toward basic and acidic residues.

This sequence belongs to the dCTP deaminase family. In terms of assembly, homotrimer.

It carries out the reaction dCTP + H2O + H(+) = dUTP + NH4(+). It participates in pyrimidine metabolism; dUMP biosynthesis; dUMP from dCTP (dUTP route): step 1/2. Catalyzes the deamination of dCTP to dUTP. This Halorubrum lacusprofundi (strain ATCC 49239 / DSM 5036 / JCM 8891 / ACAM 34) protein is dCTP deaminase.